The following is a 293-amino-acid chain: GDT1-like protein 3 (293 aa).

The N-terminal stretch at 1 to 25 is a signal peptide; the sequence is MGLISNPTRLILVATIFFLVSSISG. Transmembrane regions (helical) follow at residues 89–109, 115–135, 148–168, 200–220, 238–258, and 272–292; these read FSMI…ALMA, ATVL…STGL, TNSA…YIAW, LFSR…FLAE, AIGV…LAVV, and VATV…FYPP.

This sequence belongs to the GDT1 family.

The protein localises to the membrane. This chain is GDT1-like protein 3, found in Arabidopsis thaliana (Mouse-ear cress).